Here is a 299-residue protein sequence, read N- to C-terminus: Ribosome-inactivating protein saporin-6 (299 aa).

The first 24 residues, 1 to 24 (MKIYVVATIAWILLQFSAWTTTDA), serve as a signal peptide directing secretion. Glu-200 is an active-site residue. Positions 278–299 (SSNEANSTVRHYGPLKPTLLIT) are excised as a propeptide. Asn-283 is a glycosylation site (N-linked (GlcNAc...) asparagine).

The protein belongs to the ribosome-inactivating protein family. Type 1 RIP subfamily. Seeds and leaves of the plant.

It carries out the reaction Endohydrolysis of the N-glycosidic bond at one specific adenosine on the 28S rRNA.. Ribosome-inactivating protein of type 1, inhibits protein synthesis in animal cells. Useful as immunotoxin for pharmacological applications. The sequence is that of Ribosome-inactivating protein saporin-6 (SAP6) from Saponaria officinalis (Common soapwort).